A 361-amino-acid chain; its full sequence is Phosphoserine aminotransferase (361 aa).

L-glutamate is bound at residue arginine 43. Pyridoxal 5'-phosphate is bound by residues 77-78, tryptophan 103, threonine 153, aspartate 172, and glutamine 195; that span reads AS. Residue lysine 196 is modified to N6-(pyridoxal phosphate)lysine. Residue 237–238 coordinates pyridoxal 5'-phosphate; sequence NT.

The protein belongs to the class-V pyridoxal-phosphate-dependent aminotransferase family. SerC subfamily. In terms of assembly, homodimer. It depends on pyridoxal 5'-phosphate as a cofactor.

Its subcellular location is the cytoplasm. It carries out the reaction O-phospho-L-serine + 2-oxoglutarate = 3-phosphooxypyruvate + L-glutamate. The catalysed reaction is 4-(phosphooxy)-L-threonine + 2-oxoglutarate = (R)-3-hydroxy-2-oxo-4-phosphooxybutanoate + L-glutamate. The protein operates within amino-acid biosynthesis; L-serine biosynthesis; L-serine from 3-phospho-D-glycerate: step 2/3. It functions in the pathway cofactor biosynthesis; pyridoxine 5'-phosphate biosynthesis; pyridoxine 5'-phosphate from D-erythrose 4-phosphate: step 3/5. Functionally, catalyzes the reversible conversion of 3-phosphohydroxypyruvate to phosphoserine and of 3-hydroxy-2-oxo-4-phosphonooxybutanoate to phosphohydroxythreonine. The chain is Phosphoserine aminotransferase from Desulfotalea psychrophila (strain LSv54 / DSM 12343).